Consider the following 396-residue polypeptide: Elongation factor Tu (396 aa).

The region spanning 10-206 is the tr-type G domain; sequence KPHVNIGTIG…ACDTYIPAPV (197 aa). The segment at 19–26 is G1; the sequence is GHVDHGKT. 19 to 26 contacts GTP; sequence GHVDHGKT. Residue Thr26 coordinates Mg(2+). Residues 60-64 form a G2 region; it reads GITIS. The tract at residues 81 to 84 is G3; it reads DCPG. GTP contacts are provided by residues 81-85 and 136-139; these read DCPGH and NKVD. A G4 region spans residues 136–139; the sequence is NKVD. The tract at residues 174 to 176 is G5; it reads SAL.

It belongs to the TRAFAC class translation factor GTPase superfamily. Classic translation factor GTPase family. EF-Tu/EF-1A subfamily. Monomer.

The protein localises to the cytoplasm. It catalyses the reaction GTP + H2O = GDP + phosphate + H(+). GTP hydrolase that promotes the GTP-dependent binding of aminoacyl-tRNA to the A-site of ribosomes during protein biosynthesis. The chain is Elongation factor Tu from Bdellovibrio bacteriovorus (strain ATCC 15356 / DSM 50701 / NCIMB 9529 / HD100).